Here is a 140-residue protein sequence, read N- to C-terminus: Ribosome maturation factor RimP (140 aa).

The protein belongs to the RimP family.

The protein localises to the cytoplasm. In terms of biological role, required for maturation of 30S ribosomal subunits. The polypeptide is Ribosome maturation factor RimP (Campylobacter hominis (strain ATCC BAA-381 / DSM 21671 / CCUG 45161 / LMG 19568 / NCTC 13146 / CH001A)).